Reading from the N-terminus, the 501-residue chain is Type II secretion system protein E (501 aa).

Position 262–269 (262–269 (GPTGSGKS)) interacts with ATP. 4 residues coordinate Zn(2+): C395, C398, C428, and C431.

The protein belongs to the GSP E family. As to quaternary structure, forms homooligomers; most probably hexamers. Interacts with ExeL/GspL. Zn(2+) serves as cofactor.

The protein localises to the cell inner membrane. It catalyses the reaction ATP + H2O + cellular proteinSide 1 = ADP + phosphate + cellular proteinSide 2.. Its function is as follows. ATPase component of the type II secretion system required for the energy-dependent secretion of extracellular factors such as proteases and toxins from the periplasm. Acts as a molecular motor to provide the energy that is required for assembly of the pseudopilus and the extrusion of substrates generated in the cytoplasm. In Aeromonas hydrophila, this protein is Type II secretion system protein E (exeE).